The following is a 319-amino-acid chain: Acetyl-coenzyme A carboxylase carboxyl transferase subunit alpha (319 aa).

A CoA carboxyltransferase C-terminal domain is found at 38 to 293 (HALQDKLRMR…KAVLLNELDA (256 aa)).

The protein belongs to the AccA family. As to quaternary structure, acetyl-CoA carboxylase is a heterohexamer composed of biotin carboxyl carrier protein (AccB), biotin carboxylase (AccC) and two subunits each of ACCase subunit alpha (AccA) and ACCase subunit beta (AccD).

The protein localises to the cytoplasm. It carries out the reaction N(6)-carboxybiotinyl-L-lysyl-[protein] + acetyl-CoA = N(6)-biotinyl-L-lysyl-[protein] + malonyl-CoA. Its pathway is lipid metabolism; malonyl-CoA biosynthesis; malonyl-CoA from acetyl-CoA: step 1/1. Its function is as follows. Component of the acetyl coenzyme A carboxylase (ACC) complex. First, biotin carboxylase catalyzes the carboxylation of biotin on its carrier protein (BCCP) and then the CO(2) group is transferred by the carboxyltransferase to acetyl-CoA to form malonyl-CoA. The protein is Acetyl-coenzyme A carboxylase carboxyl transferase subunit alpha of Stenotrophomonas maltophilia (strain K279a).